Here is a 172-residue protein sequence, read N- to C-terminus: ATP synthase subunit b (172 aa).

Residues leucine 27–glutamate 47 traverse the membrane as a helical segment.

The protein belongs to the ATPase B chain family. As to quaternary structure, F-type ATPases have 2 components, F(1) - the catalytic core - and F(0) - the membrane proton channel. F(1) has five subunits: alpha(3), beta(3), gamma(1), delta(1), epsilon(1). F(0) has four main subunits: a(1), b(1), b'(1) and c(10-14). The alpha and beta chains form an alternating ring which encloses part of the gamma chain. F(1) is attached to F(0) by a central stalk formed by the gamma and epsilon chains, while a peripheral stalk is formed by the delta, b and b' chains.

It is found in the cellular thylakoid membrane. Functionally, f(1)F(0) ATP synthase produces ATP from ADP in the presence of a proton or sodium gradient. F-type ATPases consist of two structural domains, F(1) containing the extramembraneous catalytic core and F(0) containing the membrane proton channel, linked together by a central stalk and a peripheral stalk. During catalysis, ATP synthesis in the catalytic domain of F(1) is coupled via a rotary mechanism of the central stalk subunits to proton translocation. Component of the F(0) channel, it forms part of the peripheral stalk, linking F(1) to F(0). This Prochlorococcus marinus (strain MIT 9313) protein is ATP synthase subunit b.